Here is a 467-residue protein sequence, read N- to C-terminus: Glutamate--tRNA ligase (467 aa).

Positions 9–19 match the 'HIGH' region motif; sequence PSPTGYLHIGG. The 'KMSKS' region signature appears at 237–241; it reads KLSKR. Residue Lys240 coordinates ATP.

This sequence belongs to the class-I aminoacyl-tRNA synthetase family. Glutamate--tRNA ligase type 1 subfamily. Monomer.

Its subcellular location is the cytoplasm. The catalysed reaction is tRNA(Glu) + L-glutamate + ATP = L-glutamyl-tRNA(Glu) + AMP + diphosphate. Functionally, catalyzes the attachment of glutamate to tRNA(Glu) in a two-step reaction: glutamate is first activated by ATP to form Glu-AMP and then transferred to the acceptor end of tRNA(Glu). The sequence is that of Glutamate--tRNA ligase from Xanthomonas campestris pv. campestris (strain 8004).